We begin with the raw amino-acid sequence, 255 residues long: Small ribosomal subunit protein uS2 (255 aa).

It belongs to the universal ribosomal protein uS2 family.

The polypeptide is Small ribosomal subunit protein uS2 (Streptococcus uberis (strain ATCC BAA-854 / 0140J)).